Here is a 33-residue protein sequence, read N- to C-terminus: Dermonecrotic toxin LbSicTox-alphaIB1b (33 aa).

Residue H11 is part of the active site. The Mg(2+) site is built by E31 and D33.

The protein belongs to the arthropod phospholipase D family. Class II subfamily. It depends on Mg(2+) as a cofactor. Contains 2 disulfide bonds. As to expression, expressed by the venom gland.

Its subcellular location is the secreted. It carries out the reaction an N-(acyl)-sphingosylphosphocholine = an N-(acyl)-sphingosyl-1,3-cyclic phosphate + choline. The enzyme catalyses an N-(acyl)-sphingosylphosphoethanolamine = an N-(acyl)-sphingosyl-1,3-cyclic phosphate + ethanolamine. It catalyses the reaction a 1-acyl-sn-glycero-3-phosphocholine = a 1-acyl-sn-glycero-2,3-cyclic phosphate + choline. The catalysed reaction is a 1-acyl-sn-glycero-3-phosphoethanolamine = a 1-acyl-sn-glycero-2,3-cyclic phosphate + ethanolamine. Its function is as follows. Dermonecrotic toxins cleave the phosphodiester linkage between the phosphate and headgroup of certain phospholipids (sphingolipid and lysolipid substrates), forming an alcohol (often choline) and a cyclic phosphate. This toxin acts on sphingomyelin (SM) with high activity (9.5 U/mg). It may also act on ceramide phosphoethanolamine (CPE), lysophosphatidylcholine (LPC) and lysophosphatidylethanolamine (LPE), but not on lysophosphatidylserine (LPS), and lysophosphatidylglycerol (LPG). It acts by transphosphatidylation, releasing exclusively cyclic phosphate products as second products. Induces dermonecrosis, hemolysis, increased vascular permeability, edema, inflammatory response, and platelet aggregation. The protein is Dermonecrotic toxin LbSicTox-alphaIB1b of Loxosceles boneti (North American fiddleback spider).